Here is a 298-residue protein sequence, read N- to C-terminus: MLTIDHVTKTFGDYKAVDGLDLDIPEQQMFGLLGANGAGKTTTFRMILGLLSITEGSISWKGRPVNYHISNKIGYLPEERGLYPKMKVRDQLVYLARLKGMEKREAVKELGTWLERFNITDYENKKVEELSKGNQQKIQFISAVLHKPELLILDEPFSGLDPVNVELLKEAVISLKNSGVSILFSSHRMEHVEELCENLCILQKGKPVVQGKLKEIKRSFGKKNVTIHSDDDLRFLQSHEGILQWKETADGVKLQIANEDISQEIFAMLQGKGFIRKFELEEPSLHDIFIEKVGAVYE.

The ABC transporter domain maps to leucine 2–serine 229. Glycine 34–threonine 41 serves as a coordination point for ATP.

This sequence belongs to the ABC transporter superfamily.

The protein localises to the cell membrane. This is an uncharacterized protein from Bacillus subtilis (strain 168).